We begin with the raw amino-acid sequence, 164 residues long: MFAVIKTGGRQFRVVPNDVLEIGKITGDVGTIVQLGEVMAVGGDTPVLGFPFIEGASVAAEILDHKRGPKVIAFKKRRRKNSKRKRGYRDEITVIRVTEILTDDKAPTIGPRAKKEKKVEAAPADGEAPAKKAPAKKAAAKKAAPKAAAKKAPAKKAAPKAKSE.

Residues 105–164 (KAPTIGPRAKKEKKVEAAPADGEAPAKKAPAKKAAAKKAAPKAAAKKAPAKKAAPKAKSE) are disordered. The segment covering 133–164 (APAKKAAAKKAAPKAAAKKAPAKKAAPKAKSE) has biased composition (basic residues).

This sequence belongs to the bacterial ribosomal protein bL21 family. As to quaternary structure, part of the 50S ribosomal subunit. Contacts protein L20.

This protein binds to 23S rRNA in the presence of protein L20. The protein is Large ribosomal subunit protein bL21 of Afipia carboxidovorans (strain ATCC 49405 / DSM 1227 / KCTC 32145 / OM5) (Oligotropha carboxidovorans).